A 198-amino-acid polypeptide reads, in one-letter code: dTTP/UTP pyrophosphatase (198 aa).

D75 functions as the Proton acceptor in the catalytic mechanism.

The protein belongs to the Maf family. YhdE subfamily. A divalent metal cation is required as a cofactor.

Its subcellular location is the cytoplasm. It catalyses the reaction dTTP + H2O = dTMP + diphosphate + H(+). It carries out the reaction UTP + H2O = UMP + diphosphate + H(+). Its function is as follows. Nucleoside triphosphate pyrophosphatase that hydrolyzes dTTP and UTP. May have a dual role in cell division arrest and in preventing the incorporation of modified nucleotides into cellular nucleic acids. In Wolbachia sp. subsp. Brugia malayi (strain TRS), this protein is dTTP/UTP pyrophosphatase.